Consider the following 299-residue polypeptide: NmrA-like family domain-containing protein 1 (299 aa).

Residues 11-16 (GATGAQ), 37-41 (RDPGQ), 58-59 (DQ), 79-81 (TNY), K92, K133, and 155-158 (YFEN) contribute to the NADP(+) site. Positions 153–189 (PCYFENLLSYFLPQKAPDGRSYLLSLPMGDVPIDGMS) are interaction with ASS1.

The protein belongs to the NmrA-type oxidoreductase family. Homodimer. Interacts with ASS1. Interaction is enhanced by low NADPH/NADP(+) ratios, which results in inhibition of ASS1 activity.

Its subcellular location is the cytoplasm. It localises to the perinuclear region. The protein localises to the nucleus. Functionally, redox sensor protein. Undergoes restructuring and subcellular redistribution in response to changes in intracellular NADPH/NADP(+) levels. At low NADPH concentrations the protein is found mainly as a monomer, and binds argininosuccinate synthase (ASS1), the enzyme involved in nitric oxide synthesis. Association with ASS1 impairs its activity and reduces the production of nitric oxide, which subsecuently prevents apoptosis. Under normal NADPH concentrations, the protein is found as a dimer and hides the binding site for ASS1. The homodimer binds one molecule of NADPH. Has higher affinity for NADPH than for NADP(+). Binding to NADPH is necessary to form a stable dimer. The chain is NmrA-like family domain-containing protein 1 (NMRAL1) from Bos taurus (Bovine).